The sequence spans 73 residues: Putative antitoxin VapB16 (73 aa).

The protein belongs to the UPF0330 family.

Functionally, possibly the antitoxin component of a type II toxin-antitoxin (TA) system. Its cognate toxin is VapC16 (Potential). This Archaeoglobus fulgidus (strain ATCC 49558 / DSM 4304 / JCM 9628 / NBRC 100126 / VC-16) protein is Putative antitoxin VapB16 (vapB16).